The chain runs to 688 residues: Glycine--tRNA ligase beta subunit (688 aa).

Belongs to the class-II aminoacyl-tRNA synthetase family. As to quaternary structure, tetramer of two alpha and two beta subunits.

It is found in the cytoplasm. The enzyme catalyses tRNA(Gly) + glycine + ATP = glycyl-tRNA(Gly) + AMP + diphosphate. The protein is Glycine--tRNA ligase beta subunit of Lactobacillus delbrueckii subsp. bulgaricus (strain ATCC BAA-365 / Lb-18).